Reading from the N-terminus, the 410-residue chain is O-methyltransferase afvC (410 aa).

S-adenosyl-L-methionine-binding positions include 253-254, D278, 299-300, and R315; these read GG and DF. H319 (proton acceptor) is an active-site residue.

The protein belongs to the class I-like SAM-binding methyltransferase superfamily. Cation-independent O-methyltransferase family. COMT subfamily.

The protein operates within secondary metabolite biosynthesis. Functionally, O-methyltransferase; part of the gene cluster that mediates the biosynthesis of aflavarin, a bicoumarin that exhibits anti-insectan activity against the fungivorous beetle C.hemipterus. This is O-methyltransferase afvC from Aspergillus flavus (strain ATCC 200026 / FGSC A1120 / IAM 13836 / NRRL 3357 / JCM 12722 / SRRC 167).